The primary structure comprises 194 residues: Lymphocyte antigen 6 complex locus protein G5b (194 aa).

The signal sequence occupies residues 1 to 18 (MRARVLVGMLTMVGFAMG). Positions 26 to 118 (RTCHLCLLED…SAQHQSTLRG (93 aa)) constitute a UPAR/Ly6 domain. 5 disulfide bridges follow: cysteine 28/cysteine 55, cysteine 31/cysteine 40, cysteine 47/cysteine 73, cysteine 81/cysteine 98, and cysteine 99/cysteine 104. A glycan (N-linked (GlcNAc...) asparagine) is linked at asparagine 63. Residue asparagine 141 is glycosylated (N-linked (GlcNAc...) asparagine).

As to quaternary structure, monomer. Post-translationally, N-glycosylated.

It is found in the secreted. The polypeptide is Lymphocyte antigen 6 complex locus protein G5b (Ly6g5b) (Mus musculus (Mouse)).